A 473-amino-acid chain; its full sequence is MSKVKTRFAPSPTGYLHLGNARTAIFSYLFARHNNGGFVLRIEDTDPERSKKEYEEMLIEDLKWLGIDWDEFYRQSERFDIYREYVNKLLESGHAYPCFCTPEELEKEREEARKKGIPYRYSGKCRHLTPEEVEKFKKEGKPFAIRFKVPENRTVVFEDLIKGHIAINTDDFGDFVIVRSDGSPTYNFVVVVDDALMGITHVIRGEDHIPNTPKQILIYEALGFPVPKFAHLPVILGEDRSKLSKRHGAVSVRAYREEGYMPEALFNYLCLLGWSPPEEGREIFSKEELIKIFDLKDVNDSPAVFNKEKLKWMNGVYIREVLPLDVLLERAIPFLEKAGYDTSDREYIKKVLEYTRDSFDTLSEMVDRLRPFFVDEFEIPEELWSFLDDEKAYQVLSAFLEKIREKKPETPQEVKKLAKEIQKALKVKPPQVWKPLRIALTGELEGVGIDILIAVLPKEKIEKRILRVLEKLS.

Residues 10 to 20 carry the 'HIGH' region motif; that stretch reads PSPTGYLHLGN. Residues Cys98, Cys100, Cys125, and His127 each contribute to the Zn(2+) site. Residues 242-246 carry the 'KMSKS' region motif; it reads KLSKR. Residue Lys245 coordinates ATP.

It belongs to the class-I aminoacyl-tRNA synthetase family. Glutamate--tRNA ligase type 1 subfamily. As to quaternary structure, monomer. It depends on Zn(2+) as a cofactor.

It localises to the cytoplasm. The enzyme catalyses tRNA(Glu) + L-glutamate + ATP = L-glutamyl-tRNA(Glu) + AMP + diphosphate. Its function is as follows. Catalyzes the attachment of glutamate to tRNA(Glu) in a two-step reaction: glutamate is first activated by ATP to form Glu-AMP and then transferred to the acceptor end of tRNA(Glu). This Aquifex aeolicus (strain VF5) protein is Glutamate--tRNA ligase.